A 419-amino-acid polypeptide reads, in one-letter code: Tyrosine--tRNA ligase 1 (419 aa).

Residue Y35 coordinates L-tyrosine. The 'HIGH' region motif lies at 40 to 49 (PTAGSLHIGH). L-tyrosine is bound by residues Y172 and Q176. The short motif at 232 to 236 (KFGKT) is the 'KMSKS' region element. Position 235 (K235) interacts with ATP. An S4 RNA-binding domain is found at 353 to 418 (QDLVELLIES…KKHFCLVKRA (66 aa)).

This sequence belongs to the class-I aminoacyl-tRNA synthetase family. TyrS type 1 subfamily. Homodimer.

Its subcellular location is the cytoplasm. The catalysed reaction is tRNA(Tyr) + L-tyrosine + ATP = L-tyrosyl-tRNA(Tyr) + AMP + diphosphate + H(+). Its function is as follows. Catalyzes the attachment of tyrosine to tRNA(Tyr) in a two-step reaction: tyrosine is first activated by ATP to form Tyr-AMP and then transferred to the acceptor end of tRNA(Tyr). This is Tyrosine--tRNA ligase 1 from Vibrio parahaemolyticus serotype O3:K6 (strain RIMD 2210633).